The chain runs to 361 residues: Terpene synthase 6 (361 aa).

The short motif at 81–86 (DDVLDA) is the DDxx(x)D/E motif element. Residues 223–231 (NDLVSYEKE) carry the NDxxSxxxD/E motif motif.

This sequence belongs to the terpene synthase family.

It carries out the reaction (2E,6E)-farnesyl diphosphate = (2S,3R,6S,9S)-(-)-protoillud-7-ene + diphosphate. Its function is as follows. Terpene synthase that converts its substrate farnesyl diphosphate (FPP) into the sesquiterpene (2S,3R,6S,9S)-(-)-protoillud-7-ene. In Dictyostelium discoideum (Social amoeba), this protein is Terpene synthase 6.